We begin with the raw amino-acid sequence, 113 residues long: Prefoldin subunit beta (113 aa).

The protein belongs to the prefoldin subunit beta family. As to quaternary structure, heterohexamer of two alpha and four beta subunits.

It is found in the cytoplasm. In terms of biological role, molecular chaperone capable of stabilizing a range of proteins. Seems to fulfill an ATP-independent, HSP70-like function in archaeal de novo protein folding. The sequence is that of Prefoldin subunit beta from Methanococcus maripaludis (strain C7 / ATCC BAA-1331).